The primary structure comprises 469 residues: MSAANMPAGFTDYKVADISLAAWGRRETIIAESEMPALMGLRRKYLTEQPLKGAKILGCIHMTIQTAVLIETLVALGAEVRWSSCNIFSTQDQAAASIAAAGIPVFAWKGETEEEYEWCLEQTILKDGQPWDANMILDDGGDLTELLHKKYPQVLDRVHGVTEETTTGVHRLLDMLAKGELKVPAINVNDSVTKSKNDNKYGCRHSLNDAIKRGTDHLLSGKQALVIGYGDVGKGSAQSLRQEGMIVKVTEVDPICAMQACMDGFELVSPFIDGINDGTEASIDKALLGKIDLIVTTTGNVNVCDANMLKALKKRAVVCNIGHFDNEIDTAFMRKNWAWEEVKPQVHKIHRTGAGSFDPQNDDYLILLAEGRLVNLGNATGHPSRIMDGSFANQVLAQIFLFEQKYADLSAEKKAERLTVEVLPKKLDEEVALEMVRGFGGVVTKLTKQQADYIGVTVEGPFKPHAYRY.

3 residues coordinate substrate: T63, D139, and E164. 165–167 (TTT) lines the NAD(+) pocket. The substrate site is built by K194 and D198. NAD(+)-binding positions include N199, 228–233 (GYGDVG), E251, N300, 321–323 (IGH), and N375.

This sequence belongs to the adenosylhomocysteinase family. The cofactor is NAD(+).

Its subcellular location is the cytoplasm. It carries out the reaction S-adenosyl-L-homocysteine + H2O = L-homocysteine + adenosine. It participates in amino-acid biosynthesis; L-homocysteine biosynthesis; L-homocysteine from S-adenosyl-L-homocysteine: step 1/1. May play a key role in the regulation of the intracellular concentration of adenosylhomocysteine. The polypeptide is Adenosylhomocysteinase (Pseudomonas putida (strain GB-1)).